A 323-amino-acid polypeptide reads, in one-letter code: Trihelix transcription factor GT-3a (323 aa).

The span at 1 to 20 (MDRRNPFQHHHHHHQLHHHL) shows a compositional bias: basic residues. A disordered region spans residues 1 to 51 (MDRRNPFQHHHHHHQLHHHLIQQQQLPPPPLSTTATMDPGGGGGGGERIPQ). The 57-residue stretch at 52-108 (WSIEETKELLAIREELDQTFMETKRNKLLWEVVAAKMADKGFVRSAEQCKSKWKNLV) folds into the Myb-like domain. Disordered stretches follow at residues 147–176 (EATE…EPNQ), 190–220 (KRET…GTKA), and 269–297 (ELEE…ARAQ). A compositionally biased stretch (acidic residues) spans 164–176 (SDDEEEEVDEPNQ).

As to quaternary structure, homodimer. Heterodimer with GT-3B. In terms of tissue distribution, predominantly expressed in roots and flower buds.

The protein localises to the nucleus. Its function is as follows. Probable transcription factor that binds specifically to the core DNA sequence 5'-GTTAC-3'. The polypeptide is Trihelix transcription factor GT-3a (GT-3A) (Arabidopsis thaliana (Mouse-ear cress)).